The chain runs to 465 residues: Presenilin spe-4 (465 aa).

Topologically, residues 1-18 (MDTLRSISSELVRSSQLR) are cytoplasmic. A helical transmembrane segment spans residues 19 to 39 (WTLFSVIANMSLTLSIWIGVY). The Lumenal segment spans residues 40–71 (NMEVNSELSKTYFLDPSFEQTTGNLLLDGFIN). The helical transmembrane segment at 72–92 (GVGTILVLGCVSFIMLAFVLF) threads the bilayer. Over 93–96 (DFRR) the chain is Cytoplasmic. The chain crosses the membrane as a helical span at residues 97 to 117 (IVKAWLTLSCLLILFGVSAQT). The Lumenal portion of the chain corresponds to 118–136 (LHDMFSQVFDQDDNNQYYM). The chain crosses the membrane as a helical span at residues 137–157 (TIVLIVVPTVVYGFGGIYAFF). The Cytoplasmic portion of the chain corresponds to 158 to 160 (SNS). Residues 161–181 (SLILHQIFVVTNCSLISVFYL) traverse the membrane as a helical segment. At 182–190 (RVFPSKTTW) the chain is on the lumenal side. Residues 191–211 (FVLWIVLFWDLFAVLAPMGPL) traverse the membrane as a helical segment. Aspartate 200 is a catalytic residue. Residues 212–389 (KKVQEKASDY…DALNDGEVLR (178 aa)) are Cytoplasmic-facing. The segment at 287–356 (INPDSVPTEH…SDISTAEECD (70 aa)) is disordered. The segment covering 326 to 350 (SETSSGSSNLSSSDSSTTVSTSDIS) has biased composition (low complexity). A helical membrane pass occupies residues 390 to 410 (LGFGDFVFYSLLIGQAAASGC). Residue aspartate 394 is part of the active site. Proline 411 is a topological domain (lumenal). Residues 412 to 432 (FAVISAALGILFGLVVTLTVF) form a helical membrane-spanning segment. The Cytoplasmic segment spans residues 433–439 (STEESTT). A PAL motif is present at residues 440–442 (PAL). The helical intramembrane region spans 440-460 (PALPLPVICGTFCYFSSMFFW). Over 461–465 (EQLYG) the chain is Cytoplasmic.

It belongs to the peptidase A22A family. Homodimer. Potential component of the gamma-secretase complex, a complex probably composed of the presenilin homodimer (sel-12, hop-1 or spe-4), nicastrin (aph-2), aph-1 and pen-2.

The protein resides in the endoplasmic reticulum membrane. It localises to the golgi apparatus. The protein localises to the cis-Golgi network membrane. Functionally, potential catalytic subunit of the gamma-secretase complex during spermatogenesis, an endoprotease complex that catalyzes the intramembrane cleavage of integral membrane proteins such as Notch receptors (lin-12 or glp-1). Involved in spermatid formation during meiosis II. May be required for proper localization of macromolecules that are subject to asymmetric partitioning during spermatogenesis. The protein is Presenilin spe-4 of Caenorhabditis elegans.